A 627-amino-acid polypeptide reads, in one-letter code: DNA-directed RNA polymerase subunit gamma (627 aa).

Zn(2+)-binding residues include cysteine 70, cysteine 72, cysteine 85, and cysteine 88. Mg(2+) contacts are provided by aspartate 468, aspartate 470, and aspartate 472.

This sequence belongs to the RNA polymerase beta' chain family. RpoC1 subfamily. As to quaternary structure, in cyanobacteria the RNAP catalytic core is composed of 2 alpha, 1 beta, 1 beta', 1 gamma and 1 omega subunit. When a sigma factor is associated with the core the holoenzyme is formed, which can initiate transcription. It depends on Mg(2+) as a cofactor. The cofactor is Zn(2+).

The enzyme catalyses RNA(n) + a ribonucleoside 5'-triphosphate = RNA(n+1) + diphosphate. DNA-dependent RNA polymerase catalyzes the transcription of DNA into RNA using the four ribonucleoside triphosphates as substrates. This Synechococcus sp. (strain JA-3-3Ab) (Cyanobacteria bacterium Yellowstone A-Prime) protein is DNA-directed RNA polymerase subunit gamma.